Consider the following 338-residue polypeptide: Fructose-1,6-bisphosphatase 1 (338 aa).

A2 carries the N-acetylalanine modification. AMP contacts are provided by residues 18-22 and 28-32; these read VMEEG and TGELT. D69 and E98 together coordinate Mg(2+). 113–114 contributes to the AMP binding site; sequence KY. Mg(2+) contacts are provided by D119, L121, and D122. 122–125 provides a ligand contact to substrate; that stretch reads DGSS. R141 serves as a coordination point for AMP. K151 bears the N6-succinyllysine mark. Substrate contacts are provided by residues 213-216, 244-249, Y265, and 275-277; these read NEGY, RYVGSM, and KLR. 3 positions are modified to phosphotyrosine: Y216, Y245, and Y265. E281 is a binding site for Mg(2+).

This sequence belongs to the FBPase class 1 family. In terms of assembly, homotetramer. Requires Mg(2+) as cofactor. In terms of tissue distribution, expressed in pancreatic islets.

The enzyme catalyses beta-D-fructose 1,6-bisphosphate + H2O = beta-D-fructose 6-phosphate + phosphate. It participates in carbohydrate biosynthesis; gluconeogenesis. Subject to complex allosteric regulation. The enzyme can assume an active R-state, or an inactive T-state. Intermediate conformations may exist. AMP acts as an allosteric inhibitor. AMP binding affects the turnover of bound substrate and not the affinity for substrate. Fructose 2,6-bisphosphate acts as a competitive inhibitor. Fructose 2,6-bisphosphate and AMP have synergistic effects. Its function is as follows. Catalyzes the hydrolysis of fructose 1,6-bisphosphate to fructose 6-phosphate in the presence of divalent cations, acting as a rate-limiting enzyme in gluconeogenesis. Plays a role in regulating glucose sensing and insulin secretion of pancreatic beta-cells. Appears to modulate glycerol gluconeogenesis in liver. Important regulator of appetite and adiposity; increased expression of the protein in liver after nutrient excess increases circulating satiety hormones and reduces appetite-stimulating neuropeptides and thus seems to provide a feedback mechanism to limit weight gain. The sequence is that of Fructose-1,6-bisphosphatase 1 (FBP1) from Homo sapiens (Human).